Consider the following 386-residue polypeptide: DNA replication and repair protein RecF (386 aa).

Residue 30 to 37 (GANAQGKT) coordinates ATP.

The protein belongs to the RecF family.

It is found in the cytoplasm. The RecF protein is involved in DNA metabolism; it is required for DNA replication and normal SOS inducibility. RecF binds preferentially to single-stranded, linear DNA. It also seems to bind ATP. The sequence is that of DNA replication and repair protein RecF from Natranaerobius thermophilus (strain ATCC BAA-1301 / DSM 18059 / JW/NM-WN-LF).